The following is a 245-amino-acid chain: 1-(5-phosphoribosyl)-5-[(5-phosphoribosylamino)methylideneamino] imidazole-4-carboxamide isomerase (245 aa).

Aspartate 7 functions as the Proton acceptor in the catalytic mechanism. Aspartate 129 serves as the catalytic Proton donor.

The protein belongs to the HisA/HisF family.

The protein localises to the cytoplasm. The catalysed reaction is 1-(5-phospho-beta-D-ribosyl)-5-[(5-phospho-beta-D-ribosylamino)methylideneamino]imidazole-4-carboxamide = 5-[(5-phospho-1-deoxy-D-ribulos-1-ylimino)methylamino]-1-(5-phospho-beta-D-ribosyl)imidazole-4-carboxamide. It functions in the pathway amino-acid biosynthesis; L-histidine biosynthesis; L-histidine from 5-phospho-alpha-D-ribose 1-diphosphate: step 4/9. This chain is 1-(5-phosphoribosyl)-5-[(5-phosphoribosylamino)methylideneamino] imidazole-4-carboxamide isomerase, found in Aliivibrio fischeri (strain MJ11) (Vibrio fischeri).